Consider the following 1167-residue polypeptide: ATP-dependent helicase/deoxyribonuclease subunit B (1167 aa).

The UvrD-like helicase ATP-binding domain occupies 1–359; sequence MSLRFLLGRS…IRQTEAYRDL (359 aa). Residue 8–15 participates in ATP binding; sequence GRSGSGKT. Positions 282 to 588 constitute a UvrD-like helicase C-terminal domain; that stretch reads ANRRHEDRAL…EFSLVPPAMD (307 aa). [4Fe-4S] cluster contacts are provided by Cys804, Cys1126, Cys1129, and Cys1135.

Belongs to the helicase family. AddB/RexB type 1 subfamily. As to quaternary structure, heterodimer of AddA and AddB. The cofactor is Mg(2+). It depends on [4Fe-4S] cluster as a cofactor.

Its function is as follows. The heterodimer acts as both an ATP-dependent DNA helicase and an ATP-dependent, dual-direction single-stranded exonuclease. Recognizes the chi site generating a DNA molecule suitable for the initiation of homologous recombination. The AddB subunit has 5' -&gt; 3' nuclease activity but not helicase activity. This Geobacillus kaustophilus (strain HTA426) protein is ATP-dependent helicase/deoxyribonuclease subunit B.